Reading from the N-terminus, the 407-residue chain is Argininosuccinate synthase (407 aa).

ATP is bound by residues 16 to 24 and Ala-44; that span reads AYSGGLDTS. Residues Tyr-96 and Ser-101 each coordinate L-citrulline. Residue Gly-126 participates in ATP binding. L-aspartate contacts are provided by Thr-128, Asn-132, and Asp-133. Asn-132 is an L-citrulline binding site. L-citrulline is bound by residues Arg-136, Ser-185, Ser-194, Glu-270, and Tyr-282.

This sequence belongs to the argininosuccinate synthase family. Type 1 subfamily. In terms of assembly, homotetramer.

It is found in the cytoplasm. It catalyses the reaction L-citrulline + L-aspartate + ATP = 2-(N(omega)-L-arginino)succinate + AMP + diphosphate + H(+). Its pathway is amino-acid biosynthesis; L-arginine biosynthesis; L-arginine from L-ornithine and carbamoyl phosphate: step 2/3. The protein is Argininosuccinate synthase of Shewanella sp. (strain ANA-3).